Reading from the N-terminus, the 412-residue chain is Palmitoyltransferase ZDHHC11 (412 aa).

Residues 1 to 42 lie on the Cytoplasmic side of the membrane; that stretch reads MDTRSGSQCSVTPEAILNNEKLVLPPRISRVNGWSLPLHYFQ. The helical transmembrane segment at 43 to 63 threads the bilayer; that stretch reads VVTWAVFVGLSSATFGIFIPF. At 64 to 69 the chain is on the lumenal side; sequence LPHAWK. Residues 70–90 form a helical membrane-spanning segment; sequence YIAYVVTGGIFSFHLVVHLIA. Residues 91–176 are Cytoplasmic-facing; it reads SCIDPADSNV…YWFFFSTVAS (86 aa). Residues 125–175 form the DHHC domain; sequence QFCHLCKVTVNKKTKHCISCNKCVSGFDHHCKWINNCVGSRNYWFFFSTVA. Cys-155 (S-palmitoyl cysteine intermediate) is an active-site residue. The chain crosses the membrane as a helical span at residues 177–197; it reads ATAGMLCLIAILLYVLVQYLV. Residues 198–230 are Lumenal-facing; it reads NPGVLRTDPRYEDVKNMNTWLLFLPLFPVQVQT. A mediates interaction with IRF3 and STING1 region spans residues 198 to 412; it reads NPGVLRTDPR…MKTDSAESED (215 aa). The chain crosses the membrane as a helical span at residues 231 to 251; it reads LIVVIIGMLVLLLDFLGLVHL. The Cytoplasmic portion of the chain corresponds to 252-412; it reads GQLLIFHIYL…MKTDSAESED (161 aa). Residues 374–412 are disordered; the sequence is HPDGGSMAQEADDAPSISTLGLQQETTEPMKTDSAESED. The segment covering 389 to 400 has biased composition (polar residues); it reads SISTLGLQQETT. The span at 401-412 shows a compositional bias: basic and acidic residues; the sequence is EPMKTDSAESED.

It belongs to the DHHC palmitoyltransferase family. In terms of assembly, interacts with IRF3 and STING1; in presence of DNA viruses recruits IRF3 to STING1 promoting IRF3 phosphorylation and activation. Expressed in testis.

It localises to the endoplasmic reticulum membrane. It carries out the reaction L-cysteinyl-[protein] + hexadecanoyl-CoA = S-hexadecanoyl-L-cysteinyl-[protein] + CoA. Its function is as follows. Endoplasmic reticulum-localized palmitoyltransferase that could catalyze the addition of palmitate onto various protein substrates and be involved in a variety of cellular processes. Has a palmitoyltransferase activity toward NCDN and regulates NCDN association with endosome membranes through this palmitoylation. May play a role in cell proliferation. Also has a palmitoyltransferase activity-independent function in DNA virus-triggered and CGAS-mediated innate immune response. Functions as an adapter that recruits IRF3 to STING1 to promote the activation of that key transcriptional regulator of type I interferon (IFN)-dependent immune response. This is Palmitoyltransferase ZDHHC11 from Homo sapiens (Human).